Reading from the N-terminus, the 204-residue chain is Outer-membrane lipoprotein carrier protein (204 aa).

The N-terminal stretch at 1–21 (MKKIAVTCALLSAFAVSSVWA) is a signal peptide. The segment at 169 to 204 (QRSSYQLKSQQNGAVDMSKFTFTPPQGVTVDDQRNK) is disordered. Residues 171–181 (SSYQLKSQQNG) are compositionally biased toward polar residues.

It belongs to the LolA family. In terms of assembly, monomer.

It localises to the periplasm. Participates in the translocation of lipoproteins from the inner membrane to the outer membrane. Only forms a complex with a lipoprotein if the residue after the N-terminal Cys is not an aspartate (The Asp acts as a targeting signal to indicate that the lipoprotein should stay in the inner membrane). This chain is Outer-membrane lipoprotein carrier protein, found in Cronobacter sakazakii (strain ATCC BAA-894) (Enterobacter sakazakii).